The chain runs to 21 residues: Antimicrobial peptide scolopin-1 (21 aa).

In terms of tissue distribution, expressed by the venom gland.

It is found in the secreted. Functionally, antimicrobial peptide against both Gram-positive, -negative and yeast. Also induces histamine release by mast cells and shows moderate hemolytic activities against both human and rabbit red cells. This is Antimicrobial peptide scolopin-1 from Scolopendra mutilans (Chinese red-headed centipede).